Reading from the N-terminus, the 277-residue chain is Protein EURL homolog (277 aa).

Residues 173–201 (LGLWPGERPQNREQRDSRQRRHSGHSREE) form a disordered region. The stretch at 197–229 (HSREELMRKNVEELRQLNEQLLLQIQNVFEELS) forms a coiled coil.

Belongs to the EURL family.

In terms of biological role, plays a role in cortical progenitor cell proliferation and differentiation. May promote dendritic spine development of post-migratory cortical projection neurons by modulating the beta-catenin signaling pathway. In Danio rerio (Zebrafish), this protein is Protein EURL homolog.